Consider the following 201-residue polypeptide: FMN-dependent NADH:quinone oxidoreductase (201 aa).

FMN contacts are provided by residues Ser-9 and 16–18 (SYS).

The protein belongs to the azoreductase type 1 family. Homodimer. Requires FMN as cofactor.

The enzyme catalyses 2 a quinone + NADH + H(+) = 2 a 1,4-benzosemiquinone + NAD(+). It catalyses the reaction N,N-dimethyl-1,4-phenylenediamine + anthranilate + 2 NAD(+) = 2-(4-dimethylaminophenyl)diazenylbenzoate + 2 NADH + 2 H(+). Its function is as follows. Quinone reductase that provides resistance to thiol-specific stress caused by electrophilic quinones. Also exhibits azoreductase activity. Catalyzes the reductive cleavage of the azo bond in aromatic azo compounds to the corresponding amines. The protein is FMN-dependent NADH:quinone oxidoreductase of Mesomycoplasma hyopneumoniae (strain 7448) (Mycoplasma hyopneumoniae).